The primary structure comprises 137 residues: Peptide methionine sulfoxide reductase MsrB (137 aa).

The 123-residue stretch at Pro7–Glu129 folds into the MsrB domain. Positions 46, 49, 95, and 98 each coordinate Zn(2+). The active-site Nucleophile is Cys118.

The protein belongs to the MsrB Met sulfoxide reductase family. Requires Zn(2+) as cofactor.

It catalyses the reaction L-methionyl-[protein] + [thioredoxin]-disulfide + H2O = L-methionyl-(R)-S-oxide-[protein] + [thioredoxin]-dithiol. In Klebsiella pneumoniae (strain 342), this protein is Peptide methionine sulfoxide reductase MsrB.